A 255-amino-acid chain; its full sequence is 5'-nucleotidase SurE (255 aa).

A divalent metal cation-binding residues include aspartate 8, aspartate 9, serine 40, and asparagine 93.

Belongs to the SurE nucleotidase family. A divalent metal cation is required as a cofactor.

The protein resides in the cytoplasm. The enzyme catalyses a ribonucleoside 5'-phosphate + H2O = a ribonucleoside + phosphate. In terms of biological role, nucleotidase that shows phosphatase activity on nucleoside 5'-monophosphates. The chain is 5'-nucleotidase SurE from Bradyrhizobium diazoefficiens (strain JCM 10833 / BCRC 13528 / IAM 13628 / NBRC 14792 / USDA 110).